The chain runs to 352 residues: Fe(3+) ions import ATP-binding protein FbpC (352 aa).

One can recognise an ABC transporter domain in the interval 5 to 239 (LHIGHLSKSF…PADLDAALFI (235 aa)). 37 to 44 (GASGCGKT) serves as a coordination point for ATP.

This sequence belongs to the ABC transporter superfamily. Fe(3+) ion importer (TC 3.A.1.10) family. As to quaternary structure, the complex is composed of two ATP-binding proteins (FbpC), two transmembrane proteins (FbpB) and a solute-binding protein (FbpA).

The protein resides in the cell inner membrane. The enzyme catalyses Fe(3+)(out) + ATP + H2O = Fe(3+)(in) + ADP + phosphate + H(+). In terms of biological role, part of the ABC transporter complex FbpABC involved in Fe(3+) ions import. Responsible for energy coupling to the transport system. The polypeptide is Fe(3+) ions import ATP-binding protein FbpC (Neisseria gonorrhoeae (strain ATCC 700825 / FA 1090)).